Here is a 152-residue protein sequence, read N- to C-terminus: Anaerobic nitrite reductase SYMA (152 aa).

The Globin domain occupies 2-151 (ALTERQEALL…LVATIKAEMK (150 aa)). The Homodimerization signature appears at 35–39 (EAAPE). 5 residues coordinate heme b: serine 45, lysine 59, histidine 63, arginine 93, and histidine 98. A Homodimerization motif is present at residues 105–117 (DPHFEVMKGALLG).

The protein belongs to the plant globin family. As to quaternary structure, homodimer. Heme b serves as cofactor. Root nodules.

It is found in the cytoplasm. Its subcellular location is the nucleus. It catalyses the reaction Fe(III)-heme b-[protein] + nitric oxide + H2O = Fe(II)-heme b-[protein] + nitrite + 2 H(+). Functionally, phytoglobin that reduces nitrite to nitric oxide (NO) under anoxic conditions (e.g. during flooding or in waterlogged soil) and upon root nodulation. Required for general plant development and during nodulation, especially for the onset of symbiosis. Monitors nitric oxide (NO) levels during early phase of the nitrogen-fixing symbiosis and buffers oxygen in functioning nodules. May not function as an oxygen storage or transport protein. Has an unusually high affinity for O(2) through a hexacoordinate heme iron because of a very low dissociation constant. In Casuarina glauca (Swamp oak), this protein is Anaerobic nitrite reductase SYMA.